The chain runs to 117 residues: Histone-like protein Hq1 (117 aa).

Basic residues-rich tracts occupy residues methionine 1–alanine 17 and arginine 39–lysine 50. The interval methionine 1–alanine 117 is disordered. Positions alanine 51–arginine 68 are enriched in basic and acidic residues. The span at alanine 71 to alanine 117 shows a compositional bias: basic residues.

Functionally, binds DNA in vitro. The sequence is that of Histone-like protein Hq1 (hcbA) from Coxiella burnetii (strain RSA 493 / Nine Mile phase I).